A 210-amino-acid chain; its full sequence is MHMIRRAAGALAVFAVAALAAAPAWAATAQEQLDTFVATVKGATGSFKQSTVSPQGATQPAQSGTFAFQRPGKFKWAVQLPYEQLIVSDGKQVFQYDPDLAQVTVRQVDQAIGTSPAAILFGAGQLSQAFAVSALPDRDGLQWLRAKPRNADAGFSQVDIGLRDNQPARIELVDAFGQTTRVELSNLLPGAVPASEFQFTPPQGVDVVKM.

An N-terminal signal peptide occupies residues 1–26 (MHMIRRAAGALAVFAVAALAAAPAWA).

It belongs to the LolA family. As to quaternary structure, monomer.

Its subcellular location is the periplasm. In terms of biological role, participates in the translocation of lipoproteins from the inner membrane to the outer membrane. Only forms a complex with a lipoprotein if the residue after the N-terminal Cys is not an aspartate (The Asp acts as a targeting signal to indicate that the lipoprotein should stay in the inner membrane). This Bordetella pertussis (strain Tohama I / ATCC BAA-589 / NCTC 13251) protein is Outer-membrane lipoprotein carrier protein.